A 215-amino-acid chain; its full sequence is 3-isopropylmalate dehydratase small subunit (215 aa).

The protein belongs to the LeuD family. LeuD type 1 subfamily. As to quaternary structure, heterodimer of LeuC and LeuD.

It carries out the reaction (2R,3S)-3-isopropylmalate = (2S)-2-isopropylmalate. It functions in the pathway amino-acid biosynthesis; L-leucine biosynthesis; L-leucine from 3-methyl-2-oxobutanoate: step 2/4. Functionally, catalyzes the isomerization between 2-isopropylmalate and 3-isopropylmalate, via the formation of 2-isopropylmaleate. The sequence is that of 3-isopropylmalate dehydratase small subunit from Hahella chejuensis (strain KCTC 2396).